The primary structure comprises 485 residues: Membrane-bound lytic murein transglycosylase F (485 aa).

The N-terminal stretch at 1–29 is a signal peptide; that stretch reads MFAHTALRQRCAKWLFATGLFLLLGACVE. The interval 30 to 267 is non-LT domain; that stretch reads KPSTLERVKE…RLKDRYYGHV (238 aa). The segment at 268–485 is LT domain; sequence DVLGYVGAYT…DKPADQSPPM (218 aa). The active site involves Glu314. The segment at 465-485 is disordered; that stretch reads EGNLHVPGVNKDKPADQSPPM.

It in the N-terminal section; belongs to the bacterial solute-binding protein 3 family. The protein in the C-terminal section; belongs to the transglycosylase Slt family.

The protein resides in the cell outer membrane. The catalysed reaction is Exolytic cleavage of the (1-&gt;4)-beta-glycosidic linkage between N-acetylmuramic acid (MurNAc) and N-acetylglucosamine (GlcNAc) residues in peptidoglycan, from either the reducing or the non-reducing ends of the peptidoglycan chains, with concomitant formation of a 1,6-anhydrobond in the MurNAc residue.. Functionally, murein-degrading enzyme that degrades murein glycan strands and insoluble, high-molecular weight murein sacculi, with the concomitant formation of a 1,6-anhydromuramoyl product. Lytic transglycosylases (LTs) play an integral role in the metabolism of the peptidoglycan (PG) sacculus. Their lytic action creates space within the PG sacculus to allow for its expansion as well as for the insertion of various structures such as secretion systems and flagella. The protein is Membrane-bound lytic murein transglycosylase F of Pseudomonas putida (strain GB-1).